A 75-amino-acid polypeptide reads, in one-letter code: UPF0346 protein LGAS_0911 (75 aa).

Belongs to the UPF0346 family.

The chain is UPF0346 protein LGAS_0911 from Lactobacillus gasseri (strain ATCC 33323 / DSM 20243 / BCRC 14619 / CIP 102991 / JCM 1131 / KCTC 3163 / NCIMB 11718 / NCTC 13722 / AM63).